Here is a 200-residue protein sequence, read N- to C-terminus: Ribosomal RNA large subunit methyltransferase E (200 aa).

The S-adenosyl-L-methionine site is built by Gly49, Trp51, Asp69, Asp87, and Asp111. The Proton acceptor role is filled by Lys151.

This sequence belongs to the class I-like SAM-binding methyltransferase superfamily. RNA methyltransferase RlmE family.

Its subcellular location is the cytoplasm. The catalysed reaction is uridine(2552) in 23S rRNA + S-adenosyl-L-methionine = 2'-O-methyluridine(2552) in 23S rRNA + S-adenosyl-L-homocysteine + H(+). Functionally, specifically methylates the uridine in position 2552 of 23S rRNA at the 2'-O position of the ribose in the fully assembled 50S ribosomal subunit. The protein is Ribosomal RNA large subunit methyltransferase E of Lawsonia intracellularis (strain PHE/MN1-00).